A 370-amino-acid chain; its full sequence is Histidinol-phosphate aminotransferase (370 aa).

At Lys-223 the chain carries N6-(pyridoxal phosphate)lysine.

It belongs to the class-II pyridoxal-phosphate-dependent aminotransferase family. Histidinol-phosphate aminotransferase subfamily. Homodimer. It depends on pyridoxal 5'-phosphate as a cofactor.

It carries out the reaction L-histidinol phosphate + 2-oxoglutarate = 3-(imidazol-4-yl)-2-oxopropyl phosphate + L-glutamate. It functions in the pathway amino-acid biosynthesis; L-histidine biosynthesis; L-histidine from 5-phospho-alpha-D-ribose 1-diphosphate: step 7/9. In Methylobacterium nodulans (strain LMG 21967 / CNCM I-2342 / ORS 2060), this protein is Histidinol-phosphate aminotransferase.